The sequence spans 582 residues: MAPRKTVGILGGGQLGRMLTHPAALLGIPLLILDSGSYTPAKQTLLPPPPHSHPDGPFTSETHIRKLASACDILTVEIEHVNADVLEAVEKEGLCEVQPSPQTIRLIQNKYDQKKYLAERGVAVAPFEELPANPTEEDFKAIAGRLGLPLMLKAKTLAYDGRGNSPLKSASSGDIQASLKFLGDRPLYAEGWAPFVKEVAVMVVRNKEGEVRSYDAVETIHRESILRVCLAPLRGEKGVNQRARELAEKAVGHLEGAGIFGVEMFLMPDGELLLNEIAPRPHNSGHHTIEACLTSQFENHLRAILSLPLGSTALRVPSAAMVNILGASSTMDAIDKMADNALTVPGAAVHLYGKAESRKARKMGHITVTAESDAELNERLRALLFAQPDAHADWIDLIAPPSPAPAHSHAKPLVGIIMGSDSDLPVMHPATKILEKFGVPYELTITSAHRTPERMVKYAKTAADRGLRAIIAGAGGAAHLPGMVASETSLPVIGVPVKASVLDGVDSLYSIVQMPRGIPCATVGINNSTNAALLAVRILGTSVPALNKATEEYSKALEEEVLAKADILEEEGWDKYIERLKK.

One can recognise an ATP-grasp domain in the interval 114–305 (KKYLAERGVA…QFENHLRAIL (192 aa)). ATP is bound at residue 143–200 (AGRLGLPLMLKAKTLAYDGRGNSPLKSASSGDIQASLKFLGDRPLYAEGWAPFVKEVA).

It in the C-terminal section; belongs to the AIR carboxylase family. Class I subfamily.

It carries out the reaction 5-amino-1-(5-phospho-D-ribosyl)imidazole-4-carboxylate + H(+) = 5-amino-1-(5-phospho-beta-D-ribosyl)imidazole + CO2. The protein operates within purine metabolism; IMP biosynthesis via de novo pathway; 5-amino-1-(5-phospho-D-ribosyl)imidazole-4-carboxylate from 5-amino-1-(5-phospho-D-ribosyl)imidazole (carboxylase route): step 1/1. The sequence is that of Phosphoribosylaminoimidazole carboxylase (ADE2) from Cryptococcus neoformans var. neoformans serotype D (strain JEC21 / ATCC MYA-565) (Filobasidiella neoformans).